The primary structure comprises 211 residues: Holliday junction branch migration complex subunit RuvA (211 aa).

Residues Met1–Ala64 form a domain I region. The tract at residues Asn65–Val143 is domain II. Residues Ser144–Thr162 are flexible linker. Positions Phe163–Ile211 are domain III.

This sequence belongs to the RuvA family. In terms of assembly, homotetramer. Forms an RuvA(8)-RuvB(12)-Holliday junction (HJ) complex. HJ DNA is sandwiched between 2 RuvA tetramers; dsDNA enters through RuvA and exits via RuvB. An RuvB hexamer assembles on each DNA strand where it exits the tetramer. Each RuvB hexamer is contacted by two RuvA subunits (via domain III) on 2 adjacent RuvB subunits; this complex drives branch migration. In the full resolvosome a probable DNA-RuvA(4)-RuvB(12)-RuvC(2) complex forms which resolves the HJ.

It is found in the cytoplasm. Its function is as follows. The RuvA-RuvB-RuvC complex processes Holliday junction (HJ) DNA during genetic recombination and DNA repair, while the RuvA-RuvB complex plays an important role in the rescue of blocked DNA replication forks via replication fork reversal (RFR). RuvA specifically binds to HJ cruciform DNA, conferring on it an open structure. The RuvB hexamer acts as an ATP-dependent pump, pulling dsDNA into and through the RuvAB complex. HJ branch migration allows RuvC to scan DNA until it finds its consensus sequence, where it cleaves and resolves the cruciform DNA. The chain is Holliday junction branch migration complex subunit RuvA from Colwellia psychrerythraea (strain 34H / ATCC BAA-681) (Vibrio psychroerythus).